An 82-amino-acid chain; its full sequence is Small ribosomal subunit protein uS17 (82 aa).

The protein belongs to the universal ribosomal protein uS17 family. Part of the 30S ribosomal subunit.

In terms of biological role, one of the primary rRNA binding proteins, it binds specifically to the 5'-end of 16S ribosomal RNA. This is Small ribosomal subunit protein uS17 from Tolumonas auensis (strain DSM 9187 / NBRC 110442 / TA 4).